A 216-amino-acid chain; its full sequence is uncharacterized protein (216 aa).

6 helical membrane-spanning segments follow: residues 12-32 (YVLG…FVLA), 48-68 (GVFL…ASLL), 74-94 (LFIG…VGML), 134-154 (ILFF…YPGL), 156-176 (FLVL…FLIF), and 191-211 (LAAG…VKLA).

Belongs to the Rht family.

It is found in the cell membrane. This is an uncharacterized protein from Pseudomonas aeruginosa (strain ATCC 15692 / DSM 22644 / CIP 104116 / JCM 14847 / LMG 12228 / 1C / PRS 101 / PAO1).